The primary structure comprises 387 residues: Exodeoxyribonuclease 7 large subunit (387 aa).

Belongs to the XseA family. In terms of assembly, heterooligomer composed of large and small subunits.

The protein localises to the cytoplasm. It catalyses the reaction Exonucleolytic cleavage in either 5'- to 3'- or 3'- to 5'-direction to yield nucleoside 5'-phosphates.. Its function is as follows. Bidirectionally degrades single-stranded DNA into large acid-insoluble oligonucleotides, which are then degraded further into small acid-soluble oligonucleotides. This chain is Exodeoxyribonuclease 7 large subunit, found in Campylobacter hominis (strain ATCC BAA-381 / DSM 21671 / CCUG 45161 / LMG 19568 / NCTC 13146 / CH001A).